We begin with the raw amino-acid sequence, 530 residues long: Chaperone Ric-8A (530 aa).

Ser-435 is modified (phosphoserine; by CK2). The residue at position 440 (Thr-440) is a Phosphothreonine; by CK2. The residue at position 442 (Thr-442) is a Phosphothreonine. Residues Ser-501, Ser-522, Ser-523, and Ser-527 each carry the phosphoserine modification.

The protein belongs to the synembryn family. In terms of assembly, interacts with GDP-bound G alpha proteins GNAI1, GNAO1 and GNAQ, and with GNA13 with lower affinity. Does not interact with G-alpha proteins when they are in complex with subunits beta and gamma. Interacts (via C-terminus) with RGS14; the interaction stimulates the dissociation of the complex between RGS14 and the active GTP-bound form of GNAI1. Interacts with NCS1; interaction is favored in the absence of Ca(2+) and myristoylation of NCS1 is not required. Phosphorylated at Ser-435 and Thr-440 by CK2, stabilizing its interface with G alpha proteins.

Its subcellular location is the cytoplasm. It is found in the cell cortex. In terms of biological role, chaperone that specifically binds and folds nascent G alpha proteins prior to G protein heterotrimer formation, promoting their stability and activity: folds GNAI1, GNAO1, GNA13 and GNAQ. Does not fold G(s) G-alpha proteins GNAS nor GNAL. Also acts as a guanine nucleotide exchange factor (GEF) for G alpha proteins by stimulating exchange of bound GDP for free GTP. Involved in regulation of microtubule pulling forces during mitotic movement of chromosomes by stimulating G(i)-alpha protein (GNAI1), possibly leading to release G(i)-alpha-GTP and NuMA proteins from the NuMA-GPSM2-G(i)-alpha-GDP complex. Also acts as an activator for G(q)-alpha (GNAQ) protein by enhancing the G(q)-coupled receptor-mediated ERK activation. The chain is Chaperone Ric-8A from Rattus norvegicus (Rat).